The following is a 472-amino-acid chain: Cannabinoid receptor 1 (472 aa).

Residues 1–116 (MKSILDGLAD…CFMVLNPSQQ (116 aa)) are Extracellular-facing. Residues 2 to 23 (KSILDGLADTTFRTITTDLLYV) form a required for mitochondrial localization region. N77 and N83 each carry an N-linked (GlcNAc...) asparagine glycan. A helical membrane pass occupies residues 117–142 (LAIAVLSLTLGTFTVLENLLVLCVIL). The Cytoplasmic segment spans residues 143–154 (HSRSLRCRPSYH). Residues 155–175 (FIGSLAVADLLGSVIFVYSFI) form a helical membrane-spanning segment. Residues 176-187 (DFHVFHRKDSRN) are Extracellular-facing. The chain crosses the membrane as a helical span at residues 188–212 (VFLFKLGGVTASFTASVGSLFLTAI). Residues 213-232 (DRYISIHRPLAYKRIVTRPK) are Cytoplasmic-facing. A helical transmembrane segment spans residues 233–255 (AVVAFCLMWTIAIVIAVLPLLGW). Over 256 to 273 (NCEKLQSVCSDIFPHIDE) the chain is Extracellular. A helical membrane pass occupies residues 274 to 299 (TYLMFWIGVTSVLLLFIVYAYMYILW). Over 300–344 (KAHSHAVRMIQRGTQKSIIIHTSEDGKVQVTRPDQARMDIRLAKT) the chain is Cytoplasmic. Residues 345 to 365 (LVLILVVLIICWGPLLAIMVY) form a helical membrane-spanning segment. Over 366-377 (DVFGKMNKLIKT) the chain is Extracellular. A helical transmembrane segment spans residues 378 to 399 (VFAFCSMLCLLNSTVNPIIYAL). Over 400-472 (RSKDLRHAFR…VSTDTSAEAL (73 aa)) the chain is Cytoplasmic. C415 carries the S-palmitoyl cysteine lipid modification. Phosphoserine occurs at positions 425 and 429.

This sequence belongs to the G-protein coupled receptor 1 family. Interacts (via C-terminus) with CNRIP1; this interaction attenuates constitutive, but not agonist-dependent, inhibition of voltage-gated Ca(2+) channels in neurons. Associates with G protein alpha subunits, including G(i) alpha-1/GNAI1, G(i) alpha-3/GNAI3 and G(o)-alpha/GNAO1; palmitoylation is important for interaction with GNAI3 and GNAO1. Palmitoylation at Cys-415 is important for recruitment at plasma membrane and lipid rafts and association with G protein alpha subunits. As to expression, widely expressed, with highest levels in fetal and adult brain. Expression levels of isoform 2 and isoform 3 are much lower than those of isoform 1.

It localises to the cell membrane. The protein localises to the membrane raft. Its subcellular location is the mitochondrion outer membrane. It is found in the cell projection. The protein resides in the axon. It localises to the presynapse. Hemopressin, a peptide derived from hemoglobin subunit alpha (HBA1 and/or HBA2), acts as an antagonist peptide: hemopressin-binding efficiently blocks cannabinoid receptor CNR1 and subsequent signaling. G-protein coupled receptor for endogenous cannabinoids (eCBs), including N-arachidonoylethanolamide (also called anandamide or AEA) and 2-arachidonoylglycerol (2-AG), as well as phytocannabinoids, such as delta(9)-tetrahydrocannabinol (THC). Mediates many cannabinoid-induced effects, acting, among others, on food intake, memory loss, gastrointestinal motility, catalepsy, ambulatory activity, anxiety, chronic pain. Signaling typically involves reduction in cyclic AMP. In the hypothalamus, may have a dual effect on mitochondrial respiration depending upon the agonist dose and possibly upon the cell type. Increases respiration at low doses, while decreases respiration at high doses. At high doses, CNR1 signal transduction involves G-protein alpha-i protein activation and subsequent inhibition of mitochondrial soluble adenylate cyclase, decrease in cyclic AMP concentration, inhibition of protein kinase A (PKA)-dependent phosphorylation of specific subunits of the mitochondrial electron transport system, including NDUFS2. In the hypothalamus, inhibits leptin-induced reactive oxygen species (ROS) formation and mediates cannabinoid-induced increase in SREBF1 and FASN gene expression. In response to cannabinoids, drives the release of orexigenic beta-endorphin, but not that of melanocyte-stimulating hormone alpha/alpha-MSH, from hypothalamic POMC neurons, hence promoting food intake. In the hippocampus, regulates cellular respiration and energy production in response to cannabinoids. Involved in cannabinoid-dependent depolarization-induced suppression of inhibition (DSI), a process in which depolarization of CA1 postsynaptic pyramidal neurons mobilizes eCBs, which retrogradely activate presynaptic CB1 receptors, transiently decreasing GABAergic inhibitory neurotransmission. Also reduces excitatory synaptic transmission. In superior cervical ganglions and cerebral vascular smooth muscle cells, inhibits voltage-gated Ca(2+) channels in a constitutive, as well as agonist-dependent manner. In cerebral vascular smooth muscle cells, cannabinoid-induced inhibition of voltage-gated Ca(2+) channels leads to vasodilation and decreased vascular tone. Induces leptin production in adipocytes and reduces LRP2-mediated leptin clearance in the kidney, hence participating in hyperleptinemia. In adipose tissue, CNR1 signaling leads to increased expression of SREBF1, ACACA and FASN genes. In the liver, activation by endocannabinoids leads to increased de novo lipogenesis and reduced fatty acid catabolism, associated with increased expression of SREBF1/SREBP-1, GCK, ACACA, ACACB and FASN genes. May also affect de novo cholesterol synthesis and HDL-cholesteryl ether uptake. Peripherally modulates energy metabolism. In high carbohydrate diet-induced obesity, may decrease the expression of mitochondrial dihydrolipoyl dehydrogenase/DLD in striated muscles, as well as that of selected glucose/ pyruvate metabolic enzymes, hence affecting energy expenditure through mitochondrial metabolism. In response to cannabinoid anandamide, elicits a pro-inflammatory response in macrophages, which involves NLRP3 inflammasome activation and IL1B and IL18 secretion. In macrophages infiltrating pancreatic islets, this process may participate in the progression of type-2 diabetes and associated loss of pancreatic beta-cells. In terms of biological role, binds both 2-arachidonoylglycerol (2-AG) and anandamide. Its function is as follows. Only binds 2-arachidonoylglycerol (2-AG) with high affinity. Contrary to its effect on isoform 1, 2-AG behaves as an inverse agonist on isoform 2 in assays measuring GTP binding to membranes. Functionally, only binds 2-arachidonoylglycerol (2-AG) with high affinity. Contrary to its effect on isoform 1, 2-AG behaves as an inverse agonist on isoform 3 in assays measuring GTP binding to membranes. The sequence is that of Cannabinoid receptor 1 (CNR1) from Homo sapiens (Human).